Consider the following 450-residue polypeptide: Protein phosphatase 1F (450 aa).

Residues 152 to 409 (LVSIHAIRNT…DNITVMVVFL (258 aa)) enclose the PPM-type phosphatase domain. 4 residues coordinate Mn(2+): aspartate 194, glycine 195, aspartate 356, and aspartate 400. The interval 420–450 (GQGAGGAQADVGSQDLSTGLSELEINTSQRS) is disordered. Over residues 433 to 450 (QDLSTGLSELEINTSQRS) the composition is skewed to polar residues. Serine 450 carries the phosphoserine modification.

It belongs to the PP2C family. Associates with FEM1B. Requires Mg(2+) as cofactor. The cofactor is Mn(2+).

It carries out the reaction O-phospho-L-seryl-[protein] + H2O = L-seryl-[protein] + phosphate. It catalyses the reaction O-phospho-L-threonyl-[protein] + H2O = L-threonyl-[protein] + phosphate. In terms of biological role, dephosphorylates and concomitantly deactivates CaM-kinase II activated upon autophosphorylation, and CaM-kinases IV and I activated upon phosphorylation by CaM-kinase kinase. Promotes apoptosis. This Rattus norvegicus (Rat) protein is Protein phosphatase 1F (Ppm1f).